The sequence spans 98 residues: Cystatin-B (98 aa).

An N-acetylmethionine modification is found at M1. Residues 46–50 carry the Secondary area of contact motif; that stretch reads QVVAG.

Belongs to the cystatin family. Able to form dimers stabilized by noncovalent forces.

Its subcellular location is the cytoplasm. It localises to the nucleus. Its function is as follows. This is an intracellular thiol proteinase inhibitor. Tightly binding reversible inhibitor of cathepsins L, H and B. The protein is Cystatin-B (CSTB) of Macaca fuscata fuscata (Japanese macaque).